A 121-amino-acid polypeptide reads, in one-letter code: Regulator of ribonuclease activity B (121 aa).

The protein belongs to the RraB family. As to quaternary structure, interacts with the C-terminal region of Rne.

The protein resides in the cytoplasm. Globally modulates RNA abundance by binding to RNase E (Rne) and regulating its endonucleolytic activity. Can modulate Rne action in a substrate-dependent manner by altering the composition of the degradosome. This Psychromonas ingrahamii (strain DSM 17664 / CCUG 51855 / 37) protein is Regulator of ribonuclease activity B.